We begin with the raw amino-acid sequence, 1605 residues long: Kinesin-like protein klp-12 (1605 aa).

Residues 5–358 (CVQVALRIRP…MKYANRAKEI (354 aa)) form the Kinesin motor domain. 84 to 91 (GQTGSGKT) is an ATP binding site. Mg(2+) is bound by residues T91 and S217. Disordered stretches follow at residues 548–596 (GENV…EESE), 1085–1152 (VSDA…SNNN), and 1198–1232 (SRSN…SSSK). Residues 550-559 (NVSSEYSSMA) show a composition bias toward polar residues. The span at 560–596 (QDEDGTSNEAEELLDEEDLDEDEDETAEEKQEQEESE) shows a compositional bias: acidic residues. Positions 575-730 (EEDLDEDEDE…KKAKVELIKK (156 aa)) form a coiled coil. The span at 1116 to 1152 (VSTSPASTSFANSTSQSPSFSRNTRFRSTVGGVSNNN) shows a compositional bias: polar residues. A compositionally biased stretch (low complexity) spans 1200–1232 (SNLMSSSSSTTTTTLSSSNLLNPRGTTSSSSSK). WD repeat units lie at residues 1282-1319 (GHAR…EIRT), 1389-1427 (FLET…PLGR), 1525-1566 (AHQQ…RMKL), and 1573-1605 (AHQE…SNAV).

This sequence belongs to the TRAFAC class myosin-kinesin ATPase superfamily. Kinesin family. Component of a complex at least composed of alpha tubulin and beta tubulin. Within the complex, interacts with the alpha tubulin and beta tubulin dimer.

The protein localises to the cytoplasm. It is found in the cytoskeleton. Microtubule-binding motor protein which has ATPase activity. In complex with alpha and beta tubulins, preferentially binds to the growing microtubule plus-end to stabilize it and detaches following ATP hydrolysis. Negatively regulates axonal length through inhibiting microtubule polymerization at its plus-end. This chain is Kinesin-like protein klp-12, found in Caenorhabditis elegans.